Reading from the N-terminus, the 427-residue chain is Trigger factor (427 aa).

One can recognise a PPIase FKBP-type domain in the interval 163 to 248 (GDTVVIDFVG…VHEVKAKEVP (86 aa)).

The protein belongs to the FKBP-type PPIase family. Tig subfamily.

It localises to the cytoplasm. It catalyses the reaction [protein]-peptidylproline (omega=180) = [protein]-peptidylproline (omega=0). In terms of biological role, involved in protein export. Acts as a chaperone by maintaining the newly synthesized protein in an open conformation. Functions as a peptidyl-prolyl cis-trans isomerase. This Streptococcus equi subsp. zooepidemicus (strain MGCS10565) protein is Trigger factor.